A 117-amino-acid chain; its full sequence is Large ribosomal subunit protein bL20 (117 aa).

The protein belongs to the bacterial ribosomal protein bL20 family.

Functionally, binds directly to 23S ribosomal RNA and is necessary for the in vitro assembly process of the 50S ribosomal subunit. It is not involved in the protein synthesizing functions of that subunit. This Vibrio metschnikovii protein is Large ribosomal subunit protein bL20.